The chain runs to 549 residues: Hydroxylamine reductase (549 aa).

4 residues coordinate [4Fe-4S] cluster: cysteine 5, cysteine 8, cysteine 17, and cysteine 23. Hybrid [4Fe-2O-2S] cluster-binding residues include histidine 244, glutamate 268, cysteine 312, cysteine 403, cysteine 431, cysteine 456, glutamate 491, and lysine 493. A Cysteine persulfide modification is found at cysteine 403.

The protein belongs to the HCP family. [4Fe-4S] cluster serves as cofactor. Requires hybrid [4Fe-2O-2S] cluster as cofactor.

The protein resides in the cytoplasm. It carries out the reaction A + NH4(+) + H2O = hydroxylamine + AH2 + H(+). Catalyzes the reduction of hydroxylamine to form NH(3) and H(2)O. The chain is Hydroxylamine reductase from Clostridium perfringens (strain 13 / Type A).